Here is a 263-residue protein sequence, read N- to C-terminus: 5'-nucleotidase SurE (263 aa).

The a divalent metal cation site is built by Asp-8, Asp-9, Ser-40, and Asn-93.

This sequence belongs to the SurE nucleotidase family. A divalent metal cation serves as cofactor.

Its subcellular location is the cytoplasm. The catalysed reaction is a ribonucleoside 5'-phosphate + H2O = a ribonucleoside + phosphate. Nucleotidase that shows phosphatase activity on nucleoside 5'-monophosphates. The protein is 5'-nucleotidase SurE of Caulobacter vibrioides (strain ATCC 19089 / CIP 103742 / CB 15) (Caulobacter crescentus).